The chain runs to 715 residues: Fatty acid oxidation complex subunit alpha (715 aa).

An enoyl-CoA hydratase region spans residues 1-194 (MHEQRAKPSA…RLGLVDDAVP (194 aa)). Residues 310-715 (HALHRIGILG…QGERFYPQGS (406 aa)) form a 3-hydroxyacyl-CoA dehydrogenase region.

It in the N-terminal section; belongs to the enoyl-CoA hydratase/isomerase family. In the central section; belongs to the 3-hydroxyacyl-CoA dehydrogenase family. Heterotetramer of two alpha chains (FadJ) and two beta chains (FadI).

The protein localises to the cytoplasm. It catalyses the reaction a (3S)-3-hydroxyacyl-CoA = a (2E)-enoyl-CoA + H2O. The catalysed reaction is a 4-saturated-(3S)-3-hydroxyacyl-CoA = a (3E)-enoyl-CoA + H2O. It carries out the reaction a (3S)-3-hydroxyacyl-CoA + NAD(+) = a 3-oxoacyl-CoA + NADH + H(+). The enzyme catalyses (3S)-3-hydroxybutanoyl-CoA = (3R)-3-hydroxybutanoyl-CoA. It functions in the pathway lipid metabolism; fatty acid beta-oxidation. Its function is as follows. Catalyzes the formation of a hydroxyacyl-CoA by addition of water on enoyl-CoA. Also exhibits 3-hydroxyacyl-CoA epimerase and 3-hydroxyacyl-CoA dehydrogenase activities. The sequence is that of Fatty acid oxidation complex subunit alpha from Serratia proteamaculans (strain 568).